An 88-amino-acid chain; its full sequence is HssA/B-like protein 64 (88 aa).

The span at 1–24 shows a compositional bias: low complexity; the sequence is MTLFSSISSMSSSMTSSKSSFASF. Disordered stretches follow at residues 1 to 25 and 45 to 88; these read MTLFSSISSMSSSMTSSKSSFASFG and GVSS…GNSC. Residues 56 to 66 are compositionally biased toward gly residues; sequence AKSGGDCGGKG.

Belongs to the hssA/B family.

This chain is HssA/B-like protein 64 (hssl64), found in Dictyostelium discoideum (Social amoeba).